Here is a 331-residue protein sequence, read N- to C-terminus: NmrA-like family domain-containing oxidoreductase himF (331 aa).

NADP(+) contacts are provided by residues glycine 8 to glutamine 13, arginine 34 to serine 38, aspartate 55 to glycine 56, threonine 76 to glycine 78, lysine 133, and tryptophan 155 to alanine 167.

The protein belongs to the NmrA-type oxidoreductase family.

It participates in secondary metabolite biosynthesis. NmrA-like family domain-containing oxidoreductase; part of the him gene cluster that mediates the biosynthesis of himeic acid A, a ubiquitin-activating enzyme (E1) inhibitor. First, himA, together with the trans-enoyl reductase himH, catalyzes the formation of apolyketide chain, which is then condensed with leucine by the NRPS activity of himA. Dieckmann cyclization and release from himA gives a tetramic acid intermediate as the product of himA PKS-NRPS. HimG then catalyzes alpha-oxidation of the tetramic acid ring, with a subsequent rearrangement to yield apyrone intermediate. Two terminal methyl groups of polyketide and amide side chains are oxidized to carboxylic acids by himC cytochrome P450 monooxygenase to form himeic acid A. Himeic acid A is further converted to himeic acid B and C during culture growth. No gene responsible for pyrone to pyridone conversion was found in the him gene cluster and himeic acid A is non-enzymatically converted to himeic acid C by the incorporation of an ammonium nitrogen atom in a pH5 buffer, and to himeic acid B at a conversion ratio of 50% during incubation in MeOH for 5 days. The sequence is that of NmrA-like family domain-containing oxidoreductase himF from Aspergillus japonicus.